The sequence spans 327 residues: Ubiquinone biosynthesis protein COQ4, mitochondrial (327 aa).

Residues H208, D209, H212, and E224 each contribute to the Zn(2+) site.

This sequence belongs to the COQ4 family. As to quaternary structure, component of a multi-subunit COQ enzyme complex, composed of at least COQ3, COQ4, COQ5, COQ6, COQ7 and COQ9. It depends on Zn(2+) as a cofactor.

Its subcellular location is the mitochondrion inner membrane. The catalysed reaction is a 4-hydroxy-3-methoxy-5-(all-trans-polyprenyl)benzoate + H(+) = a 2-methoxy-6-(all-trans-polyprenyl)phenol + CO2. Its pathway is cofactor biosynthesis; ubiquinone biosynthesis. In terms of biological role, lyase that catalyzes the C1-decarboxylation of 4-hydroxy-3-methoxy-5-(all-trans-polyprenyl)benzoic acid into 2-methoxy-6-(all-trans-polyprenyl)phenol during ubiquinone biosynthesis. This Lachancea thermotolerans (strain ATCC 56472 / CBS 6340 / NRRL Y-8284) (Yeast) protein is Ubiquinone biosynthesis protein COQ4, mitochondrial.